The following is a 525-amino-acid chain: GMP synthase [glutamine-hydrolyzing] (525 aa).

In terms of domain architecture, Glutamine amidotransferase type-1 spans 8–207; the sequence is KILILDFGSQ…VMDICGCDNK (200 aa). C85 serves as the catalytic Nucleophile. Catalysis depends on residues H181 and E183. The 193-residue stretch at 208 to 400 folds into the GMPS ATP-PPase domain; that stretch reads WQPASIIEDA…LGLPYDMLYR (193 aa). Residue 235–241 participates in ATP binding; sequence SGGVDSS.

In terms of assembly, homodimer.

It catalyses the reaction XMP + L-glutamine + ATP + H2O = GMP + L-glutamate + AMP + diphosphate + 2 H(+). It participates in purine metabolism; GMP biosynthesis; GMP from XMP (L-Gln route): step 1/1. Its function is as follows. Catalyzes the synthesis of GMP from XMP. In Shewanella amazonensis (strain ATCC BAA-1098 / SB2B), this protein is GMP synthase [glutamine-hydrolyzing].